Reading from the N-terminus, the 368-residue chain is sn-1 linoleoyl-lipid 6-desaturase (368 aa).

Helical transmembrane passes span 47–67 (IILA…DVLW) and 68–88 (MKLL…FNIS). The Histidine box-1 motif lies at 89–93 (HDGNH). Positions 124 to 129 (HNVLHH) match the Histidine box-2 motif. 3 helical membrane-spanning segments follow: residues 164–184 (WFIW…DVQT), 204–224 (IATL…IPIA), and 233–253 (VIGA…VFML). The Histidine box-3 signature appears at 305 to 309 (HHLFP).

The protein belongs to the fatty acid desaturase type 2 family. The cofactor is Fe(2+).

It is found in the cell inner membrane. The protein localises to the cellular thylakoid membrane. The enzyme catalyses a 1-[(9Z,12Z)-octadecdienoyl]-2-acyl-glycerolipid + 2 reduced [2Fe-2S]-[ferredoxin] + O2 + 2 H(+) = a 1-[(6Z,9Z,12Z)-octadectrienoyl]-2-acyl-glycerolipid + 2 oxidized [2Fe-2S]-[ferredoxin] + 2 H2O. It participates in lipid metabolism; polyunsaturated fatty acid biosynthesis. With respect to regulation, activity requires ferredoxin, which is the natural electron donor, or cytochrome b5. In addition, activity is increased in the presence of the intermediate electron donors, NADPH and FADH(2). Functionally, desaturase involved in fatty acid biosynthesis. Introduces a double bond at carbon 6 of linoleoyl group (18:2) attached to the sn-1 position of the glycerol moiety of membrane glycerolipids, leading to the formation of gamma-linolenic acid (GLA). The polypeptide is sn-1 linoleoyl-lipid 6-desaturase (Arthrospira platensis (Spirulina platensis)).